The sequence spans 351 residues: Phospho-N-acetylmuramoyl-pentapeptide-transferase (351 aa).

A run of 10 helical transmembrane segments spans residues 17–37 (TAYA…FIIS), 61–83 (MGIP…FFWI), 88–105 (IYFL…CLGF), 130–150 (ILFS…HVSI), 158–178 (SLKL…LISA), 190–210 (GLAI…AYLT), 230–250 (LVIF…FNAY), 254–274 (IMMG…VALI), 279–299 (ILFA…IIQV), and 328–348 (QVVI…LSTI).

It belongs to the glycosyltransferase 4 family. MraY subfamily. Requires Mg(2+) as cofactor.

It is found in the cell inner membrane. It catalyses the reaction UDP-N-acetyl-alpha-D-muramoyl-L-alanyl-gamma-D-glutamyl-meso-2,6-diaminopimeloyl-D-alanyl-D-alanine + di-trans,octa-cis-undecaprenyl phosphate = di-trans,octa-cis-undecaprenyl diphospho-N-acetyl-alpha-D-muramoyl-L-alanyl-D-glutamyl-meso-2,6-diaminopimeloyl-D-alanyl-D-alanine + UMP. The protein operates within cell wall biogenesis; peptidoglycan biosynthesis. Functionally, catalyzes the initial step of the lipid cycle reactions in the biosynthesis of the cell wall peptidoglycan: transfers peptidoglycan precursor phospho-MurNAc-pentapeptide from UDP-MurNAc-pentapeptide onto the lipid carrier undecaprenyl phosphate, yielding undecaprenyl-pyrophosphoryl-MurNAc-pentapeptide, known as lipid I. This chain is Phospho-N-acetylmuramoyl-pentapeptide-transferase, found in Borrelia duttonii (strain Ly).